The primary structure comprises 311 residues: Aspartate carbamoyltransferase catalytic subunit (311 aa).

Positions 55 and 56 each coordinate carbamoyl phosphate. K85 contributes to the L-aspartate binding site. The carbamoyl phosphate site is built by R106, H135, and Q138. 2 residues coordinate L-aspartate: R168 and R230. Carbamoyl phosphate-binding residues include L268 and P269.

This sequence belongs to the aspartate/ornithine carbamoyltransferase superfamily. ATCase family. As to quaternary structure, heterododecamer (2C3:3R2) of six catalytic PyrB chains organized as two trimers (C3), and six regulatory PyrI chains organized as three dimers (R2).

The enzyme catalyses carbamoyl phosphate + L-aspartate = N-carbamoyl-L-aspartate + phosphate + H(+). It functions in the pathway pyrimidine metabolism; UMP biosynthesis via de novo pathway; (S)-dihydroorotate from bicarbonate: step 2/3. In terms of biological role, catalyzes the condensation of carbamoyl phosphate and aspartate to form carbamoyl aspartate and inorganic phosphate, the committed step in the de novo pyrimidine nucleotide biosynthesis pathway. This Klebsiella pneumoniae (strain 342) protein is Aspartate carbamoyltransferase catalytic subunit.